The primary structure comprises 451 residues: Phosphoglucosamine mutase (451 aa).

Serine 101 functions as the Phosphoserine intermediate in the catalytic mechanism. Mg(2+) is bound by residues serine 101, aspartate 240, aspartate 242, and aspartate 244. Phosphoserine is present on serine 101.

The protein belongs to the phosphohexose mutase family. Mg(2+) serves as cofactor. Activated by phosphorylation.

It carries out the reaction alpha-D-glucosamine 1-phosphate = D-glucosamine 6-phosphate. Its function is as follows. Catalyzes the conversion of glucosamine-6-phosphate to glucosamine-1-phosphate. In Streptococcus pyogenes serotype M1, this protein is Phosphoglucosamine mutase.